Consider the following 309-residue polypeptide: Serine/threonine-protein phosphatase 2A catalytic subunit beta isoform (309 aa).

Mn(2+) contacts are provided by aspartate 57, histidine 59, aspartate 85, and asparagine 117. The active-site Proton donor is the histidine 118. Mn(2+)-binding residues include histidine 167 and histidine 241. Tyrosine 307 is subject to Phosphotyrosine. The residue at position 309 (leucine 309) is a Leucine methyl ester.

The protein belongs to the PPP phosphatase family. PP-1 subfamily. Found in a complex with at least ARL2, PPP2CB, PPP2R1A, PPP2R2A, PPP2R5E and TBCD. Interacts with TBCD. PP2A consists of a common heterodimeric core enzyme (composed of a 36 kDa catalytic subunit (subunit C) and a 65 kDa constant regulatory subunit (PR65) (subunit A)) that associates with a variety of regulatory subunits. Proteins that associate with the core dimer include three families of regulatory subunits B (the R2/B/PR55/B55, R3/B''/PR72/PR130/PR59 and R5/B'/B56 families), the 48 kDa variable regulatory subunit, viral proteins, and cell signaling molecules. Binds PPME1. May indirectly interact with SGO1, most probably through regulatory B56 subunits. Interacts with CTTNBP2NL. Interacts with PTPA. Part of the core of STRIPAK complexes composed of PP2A catalytic and scaffolding subunits, the striatins (PP2A regulatory subunits), the striatin-associated proteins MOB4, STRIP1 and STRIP2, PDCD10 and members of the STE20 kinases, such as STK24 and STK26. Requires Mn(2+) as cofactor. Post-translationally, reversibly methyl esterified on Leu-309 by leucine carboxyl methyltransferase 1 (Lcmt1) and protein phosphatase methylesterase 1 (PPME1). Carboxyl methylation influences the affinity of the catalytic subunit for the different regulatory subunits, thereby modulating the PP2A holoenzyme's substrate specificity, enzyme activity and cellular localization. In terms of processing, phosphorylation of either threonine (by autophosphorylation-activated protein kinase) or tyrosine results in inactivation of the phosphatase. Auto-dephosphorylation has been suggested as a mechanism for reactivation. May be monoubiquitinated by NOSIP.

It is found in the cytoplasm. The protein localises to the nucleus. It localises to the chromosome. The protein resides in the centromere. Its subcellular location is the cytoskeleton. It is found in the spindle pole. It carries out the reaction O-phospho-L-seryl-[protein] + H2O = L-seryl-[protein] + phosphate. It catalyses the reaction O-phospho-L-threonyl-[protein] + H2O = L-threonyl-[protein] + phosphate. In terms of biological role, catalytic subunit of protein phosphatase 2A (PP2A), a serine/threonine phosphatase involved in the regulation of a wide variety of enzymes, signal transduction pathways, and cellular events. PP2A can modulate the activity of phosphorylase B kinase, casein kinase 2, mitogen-stimulated S6 kinase, and MAP-2 kinase. Part of the striatin-interacting phosphatase and kinase (STRIPAK) complexes. STRIPAK complexes have critical roles in protein (de)phosphorylation and are regulators of multiple signaling pathways including Hippo, MAPK, nuclear receptor and cytoskeleton remodeling. Different types of STRIPAK complexes are involved in a variety of biological processes such as cell growth, differentiation, apoptosis, metabolism and immune regulation. In Oryctolagus cuniculus (Rabbit), this protein is Serine/threonine-protein phosphatase 2A catalytic subunit beta isoform (PPP2CB).